Reading from the N-terminus, the 314-residue chain is BCL2/adenovirus E1B 19 kDa protein-interacting protein 2 (314 aa).

The segment at 1 to 21 is disordered; that stretch reads MEGVELKEEWQDEDFPIPLPE. Residues 10–21 are compositionally biased toward acidic residues; sequence WQDEDFPIPLPE. A phosphoserine mark is found at serine 41 and serine 77. Residues 76-100 form a disordered region; the sequence is ESGEIDLDGLDTPSENSNEFEWEDD. Threonine 87 bears the Phosphothreonine mark. 3 positions are modified to phosphoserine: serine 89, serine 92, and serine 114. The CRAL-TRIO domain occupies 147–304; the sequence is IEPYKKVISH…CIKQVDQELN (158 aa).

The protein resides in the cytoplasm. The protein localises to the perinuclear region. Implicated in the suppression of cell death. Interacts with the BCL-2 and adenovirus E1B 19 kDa proteins. This chain is BCL2/adenovirus E1B 19 kDa protein-interacting protein 2 (BNIP2), found in Homo sapiens (Human).